Reading from the N-terminus, the 336-residue chain is Methionine synthase (336 aa).

4 residues coordinate Zn(2+): H210, C212, E234, and C294.

This sequence belongs to the archaeal MetE family. Zn(2+) serves as cofactor.

It participates in amino-acid biosynthesis; L-methionine biosynthesis via de novo pathway. Its function is as follows. Catalyzes the transfer of a methyl group to L-homocysteine resulting in methionine formation. The physiological methyl donor is unknown. This Thermococcus kodakarensis (strain ATCC BAA-918 / JCM 12380 / KOD1) (Pyrococcus kodakaraensis (strain KOD1)) protein is Methionine synthase.